Consider the following 282-residue polypeptide: S-formylglutathione hydrolase (282 aa).

Position 2 is an N-acetylalanine (alanine 2). N6-succinyllysine is present on lysine 4. Active-site charge relay system residues include serine 149, aspartate 226, and histidine 260.

Belongs to the esterase D family. As to quaternary structure, homodimer.

The protein resides in the cytoplasm. It is found in the cytoplasmic vesicle. It carries out the reaction S-formylglutathione + H2O = formate + glutathione + H(+). In terms of biological role, serine hydrolase involved in the detoxification of formaldehyde. This is S-formylglutathione hydrolase (ESD) from Bos taurus (Bovine).